Here is a 283-residue protein sequence, read N- to C-terminus: 4-diphosphocytidyl-2-C-methyl-D-erythritol kinase (283 aa).

K10 is a catalytic residue. Position 99–109 (99–109 (PMGGGLGGGSS)) interacts with ATP. D141 is a catalytic residue.

Belongs to the GHMP kinase family. IspE subfamily. In terms of assembly, homodimer.

It carries out the reaction 4-CDP-2-C-methyl-D-erythritol + ATP = 4-CDP-2-C-methyl-D-erythritol 2-phosphate + ADP + H(+). It functions in the pathway isoprenoid biosynthesis; isopentenyl diphosphate biosynthesis via DXP pathway; isopentenyl diphosphate from 1-deoxy-D-xylulose 5-phosphate: step 3/6. Catalyzes the phosphorylation of the position 2 hydroxy group of 4-diphosphocytidyl-2C-methyl-D-erythritol. In Salmonella gallinarum (strain 287/91 / NCTC 13346), this protein is 4-diphosphocytidyl-2-C-methyl-D-erythritol kinase.